Reading from the N-terminus, the 317-residue chain is Mitochondrial thiamine pyrophosphate carrier 1 (317 aa).

6 consecutive transmembrane segments (helical) span residues 15 to 37, 80 to 100, 118 to 138, 168 to 190, 205 to 227, and 281 to 300; these read TVSWYNSVIAGSVSGVFARMATA, IPATAMYVVYGAVQFGSYSWF, LTVGALAGMTSSVVSYPLDLL, GFFTGISTAMTTVTLSTAIMFLT, FWSRPVSASSGIIAGFVSKTMVF, and GLTMGLCKSVPTTAISLFVY. 3 Solcar repeats span residues 16–103, 112–197, and 206–306; these read VSWY…FNNV, SQQG…VNIV, and WSRP…TMDL.

Belongs to the mitochondrial carrier (TC 2.A.29) family.

The protein localises to the mitochondrion inner membrane. Mitochondrial transporter that mediates uptake of thiamine pyrophosphate (ThPP) into mitochondria. The sequence is that of Mitochondrial thiamine pyrophosphate carrier 1 (TPC1) from Kluyveromyces lactis (strain ATCC 8585 / CBS 2359 / DSM 70799 / NBRC 1267 / NRRL Y-1140 / WM37) (Yeast).